We begin with the raw amino-acid sequence, 575 residues long: MSFKPLLLSLSLLSPALGVAPRQSASCRAIPGDPEWPSTSAWNALNNTVHGRLKATVPLPSVCHHEPFGTYNEDACTALKTEWLDDRTFLNNAAEVMNPGTQNYSCVPFTSPSQPCQLGNYASYSINVTGADDVIAGIRFARQKNIRLVIKNTGHDFAGKSTGTGALSLWTHHLNTTEIISSYESAEYTGPAAKLGAGVISGNVYQVVAEAGYRVMGGTCPTVGLAGGYTSGAGHSLLNGAYGMAADAVLEWEVVTAQGEHLIASQSNNTDLYWALSGGGPGTFAVVLSMTTKVFQDGPIGSGIMLFNLTSDNTEEYWGAIEDLWAFLPEFVDAGPNTWDFALTSTGFQAYAITVPDQNGTQVKSLLQPWLDSIEKRGIQYSYTPTDSPNYLQYFSSRFGPGIAGAGPATVQLASRLIPRAAMYNATQKKVIVSALRAFIEDGEDLELGCHALNVGNIEHPGNAVLPAWRNAIATCNVVNYWDWNITATEMQARKDLLVDRLIPGLEEATPGSGTYLNEIDARWKGDWITELYGDNYDRLLQIKNKYDPEHRFYAWTAVGSDSWFTDGSGRLCRV.

A signal peptide spans 1-18 (MSFKPLLLSLSLLSPALG). N-linked (GlcNAc...) asparagine glycans are attached at residues Asn46, Asn103, Asn127, Asn175, Asn268, Asn308, Asn359, Asn425, and Asn485. The FAD-binding PCMH-type domain occupies 118–297 (LGNYASYSIN…LSMTTKVFQD (180 aa)).

This sequence belongs to the oxygen-dependent FAD-linked oxidoreductase family.

The protein operates within secondary metabolite biosynthesis. In terms of biological role, bifunctional decaline synthase; part of the gene cluster that mediates the biosynthesis of calbistrin A and related compounds. Calbistrin A is a secondary metabolite with an interesting structure that was recently found to have bioactivity against leukemia cells. It consists of two polyketides linked by an ester bond: a bicyclic decalin containing polyketide and a linear 12 carbon dioic acid structure. The polyketide synthase calA is probably responsible for forming the decalin moiety. Because calA lacks a designated enoylreductase (ER) domain, the required activity is provided by the trans-enoyl reductase calK. Following release from the PKS, calF then probably catalyzes the oxidation and the subsequent Diels Alder cycloisomerization that lead to the formation of the decalin moiety. The decalin polyketide backbone includes two C-methyl groups, at C7 and C11 in backbone, of which the C7 position is probably methylated by the methyltransferase domain of calA. A candidate for adding the methyl group at C11, if not done by CalA, is the cluster methyltransferase calH. Several additional tailoring enzymes within the cluster could be involved in the modification of the decalin polyketide product. Those include the 3 cytochrome P450 monooxygenases CalE, CalG and CalL, of which one might be responsible for the introduction of the extra hydroxyl group attached to the backbone of the decalin moiety, at position C9 in the backbone, that allows for attachment of the linear moiety. One tailoring enzyme activity that is expected to be involved in biosynthesis of calbistrin is an acyltransferase for connecting the two polyketide synthase products, and which could be performed by the cluster acyltransferase calJ. The enzyme responsible for the biosynthesis of the linear moiety, probably a second PKS, has not been identified yet. This is Bifunctional decalin synthase calF from Penicillium decumbens.